The chain runs to 440 residues: MVMEKLGDSLQGALKKLIGAGRIDERTVNEVVKDIQRALLQADVNVKLVMGMSQRIKERAMKEEPPAGMNPREHVIRIVYQELMEIIGKGAEIQLKPQTIMMVGLQGSGKTTSAAKLARYFQRKGLKAGVVAADTFRPGAYHQLKTLAEKLNVGFYGEEGNPDAVEITKNGLKALEKYDIRIVDTAGRHALEADLIEEMERIHAVAKPDHKFMVLDAGIGQQASQQAHAFNDSVGITGVIITKLDGTAKGGGALSAVSETKAPIAFIGVGETPEDFEKFEADRFISRLLGMGDLKSLMEKAEESLSEEDVNVEALMQGRFTLKDMYKQLEAMNKMGPLKQIMSMLPMGMGGMKFSDEMFQATSDKMKNYKVIMDSMTEEEMTDPRVIGGSRIKRISKGSGCSSEDVRELLKYHKTMQTALKGFRGGKFNIQKMMKKKMGM.

GTP-binding positions include 104–111 (GLQGSGKT), 184–188 (DTAGR), and 242–245 (TKLD).

The protein belongs to the GTP-binding SRP family. SRP54 subfamily. Part of the signal recognition particle protein translocation system, which is composed of SRP and FtsY. Archaeal SRP consists of a 7S RNA molecule of 300 nucleotides and two protein subunits: SRP54 and SRP19.

The protein localises to the cytoplasm. It carries out the reaction GTP + H2O = GDP + phosphate + H(+). In terms of biological role, involved in targeting and insertion of nascent membrane proteins into the cytoplasmic membrane. Binds to the hydrophobic signal sequence of the ribosome-nascent chain (RNC) as it emerges from the ribosomes. The SRP-RNC complex is then targeted to the cytoplasmic membrane where it interacts with the SRP receptor FtsY. In Methanosarcina acetivorans (strain ATCC 35395 / DSM 2834 / JCM 12185 / C2A), this protein is Signal recognition particle 54 kDa protein.